Consider the following 679-residue polypeptide: Stress-70 protein, mitochondrial (679 aa).

The transit peptide at methionine 1–tyrosine 46 directs the protein to the mitochondrion. The interaction with NFS1 stretch occupies residues methionine 1–valine 432. ADP-binding residues include threonine 63 and asparagine 64. The interval threonine 63–aspartate 431 is nucleotide-binding domain (NBD). Residue lysine 76 is modified to N6-acetyllysine. Position 87 is a phosphothreonine (threonine 87). 2 positions are modified to N6-acetyllysine; alternate: lysine 135 and lysine 138. N6-succinyllysine; alternate occurs at positions 135 and 138. Residue lysine 143 is modified to N6-acetyllysine. N6-acetyllysine; alternate is present on lysine 206. The residue at position 206 (lysine 206) is an N6-succinyllysine; alternate. Lysine 206 carries the N6-malonyllysine; alternate modification. Residues lysine 234 and lysine 288 each carry the N6-acetyllysine modification. Lysine 300 is subject to N6-acetyllysine; alternate. Lysine 300 is subject to N6-succinyllysine; alternate. ADP contacts are provided by glutamate 313, lysine 316, and serine 320. Lysine 360 is modified (N6-acetyllysine; alternate). Lysine 360 bears the N6-succinyllysine; alternate mark. An N6-succinyllysine modification is found at lysine 368. Residues glycine 388 and arginine 391 each coordinate ADP. Lysine 394 carries the N6-succinyllysine modification. Position 408 is a phosphoserine (serine 408). Residues valine 432–threonine 441 are interdomain linker. The segment at valine 432 to glutamine 679 is interaction with FXN and ISCU. The tract at residues proline 442–glutamine 679 is substrate-binding domain (SBD). Arginine 513 is subject to Omega-N-methylarginine. N6-acetyllysine; alternate is present on residues lysine 567 and lysine 600. 2 positions are modified to N6-succinyllysine; alternate: lysine 567 and lysine 600. Lysine 610 bears the N6-succinyllysine mark. Position 612 is an N6-acetyllysine (lysine 612). Residue lysine 646 is modified to N6-acetyllysine; alternate. An N6-succinyllysine; alternate modification is found at lysine 646. The disordered stretch occupies residues alanine 656 to glutamine 679. Residues glutamate 669–glutamine 679 are compositionally biased toward basic and acidic residues.

This sequence belongs to the heat shock protein 70 family. As to quaternary structure, interacts strongly with the intermediate form of FXN and weakly with its mature form. Interacts with HSCB. Associates with the mitochondrial contact site and cristae organizing system (MICOS) complex, composed of at least MICOS10/MIC10, CHCHD3/MIC19, CHCHD6/MIC25, APOOL/MIC27, IMMT/MIC60, APOO/MIC23/MIC26 and QIL1/MIC13. This complex was also known under the names MINOS or MitOS complex. The MICOS complex associates with mitochondrial outer membrane proteins SAMM50, MTX1, MTX2 and DNAJC11, mitochondrial inner membrane protein TMEM11 and with HSPA9. Interacts with DNLZ, the interaction is required to prevent self-aggregation. Interacts with TESPA1. Interacts with PDPN. Interacts with NFU1, NFS1 and ISCU. Interacts with TP53; the interaction promotes TP53 degradation. Interacts (via SBD domain) with UBXN2A; the interaction with UBXN2A inhibits HSPA9/MOT-2 interaction with and degradation of TP53, thereby promotes TP53 translocation to the nucleus. Interacts with ITPR1 AND VDAC1; this interaction couples ITPR1 to VDAC1. Component of the TIM23 mitochondrial inner membrane pre-sequence translocase complex.

Its subcellular location is the mitochondrion. It localises to the nucleus. It is found in the nucleolus. The protein resides in the cytoplasm. The protein localises to the mitochondrion matrix. It carries out the reaction ATP + H2O = ADP + phosphate + H(+). Its activity is regulated as follows. The chaperone activity is regulated by ATP-induced allosteric coupling of the nucleotide-binding (NBD) and substrate-binding (SBD) domains. ATP binding in the NBD leads to a conformational change in the NBD, which is transferred through the interdomain linker (IDL) to the substrate-binding domain (SBD). This elicits a reduced substrate affinity and a faster substrate exchange rate. Upon hydrolysis of ATP to ADP, the protein undergoes a conformational change that increases its affinity for substrate proteins. It cycles through repeated phases of ATP hydrolysis and nucleotide exchange, facilitating repeated cycles of substrate binding and release. Functions in collaboration with co-chaperones. Functions with the co-chaperone, DNLZ, to maintain solubility and regulate ATP hydrolysis. Nucleotide exchange factors, GRPEL1 and GRPEL2, accelerate nucleotide exchange. Its function is as follows. Mitochondrial chaperone that plays a key role in mitochondrial protein import, folding, and assembly. Plays an essential role in the protein quality control system, the correct folding of proteins, the re-folding of misfolded proteins, and the targeting of proteins for subsequent degradation. These processes are achieved through cycles of ATP binding, ATP hydrolysis, and ADP release, mediated by co-chaperones. In mitochondria, it associates with the TIM (translocase of the inner membrane) protein complex to assist in the import and folding of mitochondrial proteins. Plays an important role in mitochondrial iron-sulfur cluster (ISC) biogenesis, interacts with and stabilizes ISC cluster assembly proteins FXN, NFU1, NFS1 and ISCU. Regulates erythropoiesis via stabilization of ISC assembly. Regulates mitochondrial calcium-dependent apoptosis by coupling two calcium channels, ITPR1 and VDAC1, at the mitochondria-associated endoplasmic reticulum (ER) membrane to facilitate calcium transport from the ER lumen to the mitochondria intermembrane space, providing calcium for the downstream calcium channel MCU, which releases it into the mitochondrial matrix. Although primarily located in the mitochondria, it is also found in other cellular compartments. In the cytosol, it associates with proteins involved in signaling, apoptosis, or senescence. It may play a role in cell cycle regulation via its interaction with and promotion of degradation of TP53. May play a role in the control of cell proliferation and cellular aging. Protects against reactive oxygen species (ROS). Extracellular HSPA9 plays a cytoprotective role by preventing cell lysis following immune attack by the membrane attack complex by disrupting formation of the complex. The protein is Stress-70 protein, mitochondrial of Cricetulus griseus (Chinese hamster).